A 177-amino-acid chain; its full sequence is Adenine phosphoribosyltransferase (177 aa).

Belongs to the purine/pyrimidine phosphoribosyltransferase family. Homodimer.

It is found in the cytoplasm. The catalysed reaction is AMP + diphosphate = 5-phospho-alpha-D-ribose 1-diphosphate + adenine. Its pathway is purine metabolism; AMP biosynthesis via salvage pathway; AMP from adenine: step 1/1. Its function is as follows. Catalyzes a salvage reaction resulting in the formation of AMP, that is energically less costly than de novo synthesis. The protein is Adenine phosphoribosyltransferase of Chlorobium phaeobacteroides (strain BS1).